A 325-amino-acid chain; its full sequence is Diacylglycerol acyltransferase/mycolyltransferase Ag85B (325 aa).

An N-terminal signal peptide occupies residues 1 to 40 (MTDVSRKIRAWGRRLMIGTAAAVVLPGLVGLAGGAATAGA). 82–83 (LR) contributes to the substrate binding site. Residues 98-108 (FEWYYQSGLSI) are fibronectin-binding. An intrachain disulfide couples Cys-127 to Cys-132. The substrate site is built by Ser-166 and Asp-194. The active-site Nucleophile is the Ser-166. The active site involves Glu-270. Substrate contacts are provided by residues 272–275 (FVRS), Lys-279, and 302–304 (HSW). Residue His-302 is part of the active site.

This sequence belongs to the mycobacterial A85 antigen family.

The protein localises to the secreted. It carries out the reaction 2 alpha,alpha'-trehalose 6-mycolate = alpha,alpha'-trehalose 6,6'-bismycolate + alpha,alpha-trehalose. The enzyme catalyses an acyl-CoA + a 1,2-diacyl-sn-glycerol = a triacyl-sn-glycerol + CoA. Functionally, the antigen 85 proteins (FbpA, FbpB, FbpC) are responsible for the high affinity of mycobacteria for fibronectin, a large adhesive glycoprotein, which facilitates the attachment of M.tuberculosis to murine alveolar macrophages (AMs). They also help to maintain the integrity of the cell wall by catalyzing the transfer of mycolic acids to cell wall arabinogalactan and through the synthesis of alpha,alpha-trehalose dimycolate (TDM, cord factor). They catalyze the transfer of a mycoloyl residue from one molecule of alpha,alpha-trehalose monomycolate (TMM) to another TMM, leading to the formation of TDM. The sequence is that of Diacylglycerol acyltransferase/mycolyltransferase Ag85B (fbpB) from Mycobacterium tuberculosis (strain ATCC 25177 / H37Ra).